The sequence spans 184 residues: Rubrerythrin-2 (184 aa).

The 145-residue stretch at 2-146 folds into the Ferritin-like diiron domain; it reads SVKNAMTADF…DAQDSAKENK (145 aa). 10 residues coordinate Fe(3+): Glu-19, Glu-52, Glu-94, Glu-97, Glu-128, His-131, Cys-156, Cys-159, Cys-171, and Cys-174. A Rubredoxin-like domain is found at 151 to 184; sequence GKVYICPVCGFTTLDENIEQCPICGVKKDKFQAF.

It depends on Fe(3+) as a cofactor.

It carries out the reaction H2O2 + NADH + H(+) = NAD(+) + 2 H2O. Its activity is regulated as follows. Rubredoxin (Rd) increases the NADH consumption rate by serving as an intermediary electron-transfer shuttle between NROR and Rbr2. In terms of biological role, functions as the terminal component of an NADH peroxidase (NADH:H(2)O(2) oxidoreductase) when using NADH:rubredoxin oxidoreductase (NROR) as the electron transport intermediary from NADH to Rbr2. The polypeptide is Rubrerythrin-2 (rbr2) (Clostridium acetobutylicum (strain ATCC 824 / DSM 792 / JCM 1419 / IAM 19013 / LMG 5710 / NBRC 13948 / NRRL B-527 / VKM B-1787 / 2291 / W)).